The chain runs to 638 residues: Threonine--tRNA ligase (638 aa).

Residues 1-61 (MPDIKLPDGS…EQNADLAIIT (61 aa)) form the TGS domain. A catalytic region spans residues 242–533 (DHRRLGKQYD…LIENFAGALP (292 aa)). C333, H384, and H510 together coordinate Zn(2+).

It belongs to the class-II aminoacyl-tRNA synthetase family. Homodimer. It depends on Zn(2+) as a cofactor.

It is found in the cytoplasm. The catalysed reaction is tRNA(Thr) + L-threonine + ATP = L-threonyl-tRNA(Thr) + AMP + diphosphate + H(+). Its function is as follows. Catalyzes the attachment of threonine to tRNA(Thr) in a two-step reaction: L-threonine is first activated by ATP to form Thr-AMP and then transferred to the acceptor end of tRNA(Thr). Also edits incorrectly charged L-seryl-tRNA(Thr). This chain is Threonine--tRNA ligase, found in Dechloromonas aromatica (strain RCB).